The chain runs to 341 residues: Anthranilate phosphoribosyltransferase (341 aa).

5-phospho-alpha-D-ribose 1-diphosphate is bound by residues G81, 84 to 85 (GD), T89, 91 to 94 (NIST), 109 to 117 (KHGNRKASS), and T121. An anthranilate-binding site is contributed by G81. Position 93 (S93) interacts with Mg(2+). N112 serves as a coordination point for anthranilate. Position 167 (R167) interacts with anthranilate. Positions 226 and 227 each coordinate Mg(2+).

This sequence belongs to the anthranilate phosphoribosyltransferase family. In terms of assembly, homodimer. The cofactor is Mg(2+).

It carries out the reaction N-(5-phospho-beta-D-ribosyl)anthranilate + diphosphate = 5-phospho-alpha-D-ribose 1-diphosphate + anthranilate. Its pathway is amino-acid biosynthesis; L-tryptophan biosynthesis; L-tryptophan from chorismate: step 2/5. Catalyzes the transfer of the phosphoribosyl group of 5-phosphorylribose-1-pyrophosphate (PRPP) to anthranilate to yield N-(5'-phosphoribosyl)-anthranilate (PRA). The protein is Anthranilate phosphoribosyltransferase of Parvibaculum lavamentivorans (strain DS-1 / DSM 13023 / NCIMB 13966).